The sequence spans 344 residues: Lipase chaperone (344 aa).

The helical transmembrane segment at Arg-13–Gly-35 threads the bilayer.

This sequence belongs to the lipase chaperone family.

Its subcellular location is the cell inner membrane. Functionally, may be involved in the folding of the extracellular lipase during its passage through the periplasm. The protein is Lipase chaperone of Burkholderia vietnamiensis (strain G4 / LMG 22486) (Burkholderia cepacia (strain R1808)).